The chain runs to 203 residues: Guanylate kinase (203 aa).

The Guanylate kinase-like domain maps to 3–181 (GTLYIVAAPS…AVSEMCAIFT (179 aa)). ATP is bound at residue 10–17 (APSGAGKS).

It belongs to the guanylate kinase family.

The protein resides in the cytoplasm. It catalyses the reaction GMP + ATP = GDP + ADP. Essential for recycling GMP and indirectly, cGMP. In Xanthomonas axonopodis pv. citri (strain 306), this protein is Guanylate kinase.